The primary structure comprises 469 residues: Argininosuccinate lyase (469 aa).

This sequence belongs to the lyase 1 family. Argininosuccinate lyase subfamily.

It is found in the cytoplasm. It carries out the reaction 2-(N(omega)-L-arginino)succinate = fumarate + L-arginine. It functions in the pathway amino-acid biosynthesis; L-arginine biosynthesis; L-arginine from L-ornithine and carbamoyl phosphate: step 3/3. The chain is Argininosuccinate lyase from Burkholderia lata (strain ATCC 17760 / DSM 23089 / LMG 22485 / NCIMB 9086 / R18194 / 383).